The primary structure comprises 371 residues: Chorismate synthase (371 aa).

R48 and R54 together coordinate NADP(+). Residues 130-132, 242-243, G287, 302-306, and R328 contribute to the FMN site; these read RSS, NA, and KPTSS.

It belongs to the chorismate synthase family. Homotetramer. The cofactor is FMNH2.

It carries out the reaction 5-O-(1-carboxyvinyl)-3-phosphoshikimate = chorismate + phosphate. Its pathway is metabolic intermediate biosynthesis; chorismate biosynthesis; chorismate from D-erythrose 4-phosphate and phosphoenolpyruvate: step 7/7. In terms of biological role, catalyzes the anti-1,4-elimination of the C-3 phosphate and the C-6 proR hydrogen from 5-enolpyruvylshikimate-3-phosphate (EPSP) to yield chorismate, which is the branch point compound that serves as the starting substrate for the three terminal pathways of aromatic amino acid biosynthesis. This reaction introduces a second double bond into the aromatic ring system. The sequence is that of Chorismate synthase from Azorhizobium caulinodans (strain ATCC 43989 / DSM 5975 / JCM 20966 / LMG 6465 / NBRC 14845 / NCIMB 13405 / ORS 571).